The chain runs to 949 residues: Glutamate receptor ionotropic, kainate 1 (949 aa).

Positions methionine 1–proline 30 are cleaved as a signal peptide. Residues glutamine 31–proline 576 are Extracellular-facing. Asparagine 68, asparagine 74, asparagine 276, asparagine 379, asparagine 428, asparagine 439, and asparagine 446 each carry an N-linked (GlcNAc...) asparagine glycan. L-glutamate is bound by residues proline 531, threonine 533, and arginine 538. Residue asparagine 561 is glycosylated (N-linked (GlcNAc...) asparagine). A helical transmembrane segment spans residues aspartate 577–alanine 597. At arginine 598–glycine 653 the chain is on the cytoplasmic side. Residues isoleucine 654–leucine 674 form a helical membrane-spanning segment. Residues threonine 675–asparagine 834 are Extracellular-facing. Residues serine 704 and threonine 705 each contribute to the L-glutamate site. Serine 725 is subject to Phosphoserine; by PKC. Glutamate 753 is a binding site for L-glutamate. Threonine 761 is subject to Phosphothreonine; by PKC. A disulfide bridge connects residues cysteine 765 and cysteine 819. N-linked (GlcNAc...) asparagine glycosylation is present at asparagine 766. A helical transmembrane segment spans residues isoleucine 835 to glycine 855. Topologically, residues glutamate 856–alanine 949 are cytoplasmic.

The protein belongs to the glutamate-gated ion channel (TC 1.A.10.1) family. GRIK1 subfamily. Homotetramer or heterotetramer of pore-forming glutamate receptor subunits. Tetramers may be formed by the dimerization of dimers. Can form functional heteromeric receptors with GRIK4 and GRIK5. Interacts with KLHL17. In terms of tissue distribution, expressed in the olfactory bulb (at protein level). Expressed in subsets of neurons throughout the developing and adult central and peripheral nervous systems. In the CNS principally in the medial amygdaloid nuclei, medial habenulae, pyriform and cingulate cortices, and Purkinje cell layer. Also highly expressed in embryonic and adult dorsal root ganglia. Expressed at high levels in the trigeminal ganglion neurons.

The protein localises to the cell membrane. The protein resides in the postsynaptic cell membrane. The catalysed reaction is Ca(2+)(in) = Ca(2+)(out). In terms of biological role, ionotropic glutamate receptor that functions as a cation-permeable ligand-gated ion channel, gated by L-glutamate and the glutamatergic agonist kainic acid. L-glutamate acts as an excitatory neurotransmitter at many synapses in the central nervous system. Binding of the excitatory neurotransmitter L-glutamate induces a conformation change, leading to the opening of the cation channel, and thereby converts the chemical signal to an electrical impulse. The receptor then desensitizes rapidly and enters a transient inactive state, characterized by the presence of bound agonist. The chain is Glutamate receptor ionotropic, kainate 1 (Grik1) from Rattus norvegicus (Rat).